A 151-amino-acid chain; its full sequence is Immunity protein YezG (151 aa).

The stretch at 62-90 (KDIFKTLLRELRELFEELRTEHRNNNDDV) forms a coiled coil.

As to quaternary structure, interacts with cognate toxin YeeF but not with non-cognate toxin YobL. The interaction probably inhibits the toxic activity of YeeF. May bind with a stoichiometry of 2:2 to YeeF.

It localises to the cytoplasm. In terms of biological role, immunity component of one of 6 LXG toxin-immunity modules in this strain. They promote kin selection, mediate competition in biofilms, and drive spatial segregation of different strains, indicating that LXG toxins may help avoid warfare between strains in biofilms. Mediates intercellular competition during biofilm formation; disruption of the operon disadvantages the bacteria, but overexpression of the cognate immunity protein restores growth in competition with wild-type. In situ neutralizes the toxic effect of cognate toxin YeeF. Probably neutralizes the ability to inhibit growth of cognate toxin YeeF. Probably does not have immunity protein activity on other LXG toxins. The protein is Immunity protein YezG (yezG) of Bacillus subtilis (strain 168).